The primary structure comprises 540 residues: Chaperonin GroEL 1 (540 aa).

Residues 29 to 32 (TLGP), 86 to 90 (DGTTT), G413, 477 to 479 (NAA), and D493 contribute to the ATP site.

Belongs to the chaperonin (HSP60) family. In terms of assembly, forms a cylinder of 14 subunits composed of two heptameric rings stacked back-to-back. Interacts with the co-chaperonin GroES.

Its subcellular location is the cytoplasm. It catalyses the reaction ATP + H2O + a folded polypeptide = ADP + phosphate + an unfolded polypeptide.. Together with its co-chaperonin GroES, plays an essential role in assisting protein folding. The GroEL-GroES system forms a nano-cage that allows encapsulation of the non-native substrate proteins and provides a physical environment optimized to promote and accelerate protein folding. This is Chaperonin GroEL 1 from Salinispora arenicola (strain CNS-205).